Here is a 198-residue protein sequence, read N- to C-terminus: Na(+)-translocating NADH-quinone reductase subunit E (198 aa).

Helical transmembrane passes span Ser11–Val31, Val35–Val55, Phe77–Ile97, Gly110–Val130, Ile140–Ile160, and Leu176–Val196.

Belongs to the NqrDE/RnfAE family. In terms of assembly, composed of six subunits; NqrA, NqrB, NqrC, NqrD, NqrE and NqrF.

Its subcellular location is the cell inner membrane. The enzyme catalyses a ubiquinone + n Na(+)(in) + NADH + H(+) = a ubiquinol + n Na(+)(out) + NAD(+). Functionally, NQR complex catalyzes the reduction of ubiquinone-1 to ubiquinol by two successive reactions, coupled with the transport of Na(+) ions from the cytoplasm to the periplasm. NqrA to NqrE are probably involved in the second step, the conversion of ubisemiquinone to ubiquinol. The chain is Na(+)-translocating NADH-quinone reductase subunit E from Histophilus somni (strain 2336) (Haemophilus somnus).